The sequence spans 153 residues: Flagellar assembly factor FliW (153 aa).

Belongs to the FliW family. In terms of assembly, interacts with translational regulator CsrA and flagellin(s).

The protein localises to the cytoplasm. In terms of biological role, acts as an anti-CsrA protein, binds CsrA and prevents it from repressing translation of its target genes, one of which is flagellin. Binds to flagellin and participates in the assembly of the flagellum. The protein is Flagellar assembly factor FliW of Heliobacterium modesticaldum (strain ATCC 51547 / Ice1).